A 232-amino-acid chain; its full sequence is Flagellar L-ring protein (232 aa).

Positions 1–21 (MQKYALHAYPVMALMVATLTG) are cleaved as a signal peptide. C22 is lipidated: N-palmitoyl cysteine. Residue C22 is the site of S-diacylglycerol cysteine attachment.

The protein belongs to the FlgH family. As to quaternary structure, the basal body constitutes a major portion of the flagellar organelle and consists of four rings (L,P,S, and M) mounted on a central rod.

The protein resides in the cell outer membrane. It is found in the bacterial flagellum basal body. Assembles around the rod to form the L-ring and probably protects the motor/basal body from shearing forces during rotation. In Salmonella choleraesuis (strain SC-B67), this protein is Flagellar L-ring protein.